A 418-amino-acid polypeptide reads, in one-letter code: Light-independent protochlorophyllide reductase subunit N (418 aa).

Positions 17, 42, and 103 each coordinate [4Fe-4S] cluster.

It belongs to the BchN/ChlN family. In terms of assembly, protochlorophyllide reductase is composed of three subunits; ChlL, ChlN and ChlB. Forms a heterotetramer of two ChlB and two ChlN subunits. It depends on [4Fe-4S] cluster as a cofactor.

It catalyses the reaction chlorophyllide a + oxidized 2[4Fe-4S]-[ferredoxin] + 2 ADP + 2 phosphate = protochlorophyllide a + reduced 2[4Fe-4S]-[ferredoxin] + 2 ATP + 2 H2O. Its pathway is porphyrin-containing compound metabolism; chlorophyll biosynthesis (light-independent). In terms of biological role, component of the dark-operative protochlorophyllide reductase (DPOR) that uses Mg-ATP and reduced ferredoxin to reduce ring D of protochlorophyllide (Pchlide) to form chlorophyllide a (Chlide). This reaction is light-independent. The NB-protein (ChlN-ChlB) is the catalytic component of the complex. The polypeptide is Light-independent protochlorophyllide reductase subunit N (Prochlorococcus marinus (strain MIT 9303)).